Consider the following 396-residue polypeptide: Imidazolonepropionase (396 aa).

2 residues coordinate Fe(3+): H70 and H72. H70 and H72 together coordinate Zn(2+). Positions 79, 137, and 164 each coordinate 4-imidazolone-5-propanoate. Y137 provides a ligand contact to N-formimidoyl-L-glutamate. H227 lines the Fe(3+) pocket. H227 provides a ligand contact to Zn(2+). Residue Q230 participates in 4-imidazolone-5-propanoate binding. D301 is a Fe(3+) binding site. D301 lines the Zn(2+) pocket. The N-formimidoyl-L-glutamate site is built by N303 and G305. S306 serves as a coordination point for 4-imidazolone-5-propanoate.

Belongs to the metallo-dependent hydrolases superfamily. HutI family. Zn(2+) is required as a cofactor. Fe(3+) serves as cofactor.

The protein localises to the cytoplasm. The enzyme catalyses 4-imidazolone-5-propanoate + H2O = N-formimidoyl-L-glutamate. It participates in amino-acid degradation; L-histidine degradation into L-glutamate; N-formimidoyl-L-glutamate from L-histidine: step 3/3. Catalyzes the hydrolytic cleavage of the carbon-nitrogen bond in imidazolone-5-propanoate to yield N-formimidoyl-L-glutamate. It is the third step in the universal histidine degradation pathway. This chain is Imidazolonepropionase, found in Mycolicibacterium smegmatis (strain ATCC 700084 / mc(2)155) (Mycobacterium smegmatis).